Reading from the N-terminus, the 325-residue chain is MNMTKTAMLIALMTVMFMSIGYLLGGGGGMMIALVIAVAMNLFGYWNSDKMVLRMYNAQEVDERSAPEYYRMVSGLAANAGLPMPKVYIIHEDQPNAFATGRNPENAAVAATTGLLNRLSPEEVAGVMAHELAHVQNRDTLTMTIVATLAGAISMLGNFAFFLGGNRENGNGVMGVVGTLLAMIVAPFGAMIVQMAVSRTREYAADKRGAEICGNPLWLSSALGRIARGAKVIPNEEAEHNPATAHMFIINPLSGRGADNLFSTHPDTDNRIAALEQMAAEMGIRSAAMTARAAAPSQNSGPWGQRSDNAGGNSNGGSRYRGPWS.

Residues 20–40 (IGYLLGGGGGMMIALVIAVAM) traverse the membrane as a helical segment. Position 130 (H130) interacts with Zn(2+). The active site involves E131. A Zn(2+)-binding site is contributed by H134. Transmembrane regions (helical) follow at residues 145-165 (IVAT…FLGG) and 173-193 (VMGV…AMIV). E202 serves as a coordination point for Zn(2+). Residues 288 to 325 (AMTARAAAPSQNSGPWGQRSDNAGGNSNGGSRYRGPWS) are disordered. Over residues 306 to 325 (RSDNAGGNSNGGSRYRGPWS) the composition is skewed to low complexity.

Belongs to the peptidase M48B family. Zn(2+) is required as a cofactor.

Its subcellular location is the cell inner membrane. This chain is Protease HtpX homolog, found in Brucella abortus (strain S19).